The primary structure comprises 358 residues: Phospho-N-acetylmuramoyl-pentapeptide-transferase (358 aa).

Transmembrane regions (helical) follow at residues 26–46, 70–90, 94–114, 134–154, 169–189, 197–217, 234–254, 261–281, 286–306, and 335–355; these read AIYATITALMIAFILGPWLID, GTPTMGGTLILLAIVLPTLLW, TNVYVWVTLLVTVGFGAVGFV, MLWLMLIAGTAGVMLYSYPPF, ELGLFYIPFAVLVIVGASNAV, GLAIGPTIIASGTYLLFAYLA, AGELAVLCGAMVGAGLGFLWF, VFMGDVGSLSLGGALGTIAVI, IVLVIVGGIFVVEALSVIVQV, and KIIVRFWIISIILALVALSTL.

The protein belongs to the glycosyltransferase 4 family. MraY subfamily. Mg(2+) is required as a cofactor.

It localises to the cell inner membrane. It catalyses the reaction UDP-N-acetyl-alpha-D-muramoyl-L-alanyl-gamma-D-glutamyl-meso-2,6-diaminopimeloyl-D-alanyl-D-alanine + di-trans,octa-cis-undecaprenyl phosphate = di-trans,octa-cis-undecaprenyl diphospho-N-acetyl-alpha-D-muramoyl-L-alanyl-D-glutamyl-meso-2,6-diaminopimeloyl-D-alanyl-D-alanine + UMP. It participates in cell wall biogenesis; peptidoglycan biosynthesis. Functionally, catalyzes the initial step of the lipid cycle reactions in the biosynthesis of the cell wall peptidoglycan: transfers peptidoglycan precursor phospho-MurNAc-pentapeptide from UDP-MurNAc-pentapeptide onto the lipid carrier undecaprenyl phosphate, yielding undecaprenyl-pyrophosphoryl-MurNAc-pentapeptide, known as lipid I. This is Phospho-N-acetylmuramoyl-pentapeptide-transferase from Syntrophotalea carbinolica (strain DSM 2380 / NBRC 103641 / GraBd1) (Pelobacter carbinolicus).